Reading from the N-terminus, the 212-residue chain is Ependymin (212 aa).

Residues 1-20 (MRLTGLLCVALWSASAVVLA) form the signal peptide. 3 N-linked (GlcNAc...) asparagine glycosylation sites follow: asparagine 69, asparagine 92, and asparagine 112.

Belongs to the ependymin family. As to quaternary structure, forms disulfide-linked dimers. In terms of processing, binds calcium through the terminal sialic acids. In terms of tissue distribution, EPDs are synthesized in the meninx and secreted in the cerebrospinal fluid.

It localises to the secreted. Its function is as follows. May play a role in neural plasticity. May be involved during axon regeneration. In Clupea harengus (Atlantic herring), this protein is Ependymin (epd).